A 446-amino-acid chain; its full sequence is Putative ZDHHC-type palmitoyltransferase 2 (446 aa).

2 disordered regions span residues 1 to 33 (MNLYNNSNSSGSSNSSSSSNNKTNIDYNDINNN) and 56 to 83 (QIINKNNNNNHNRNNNNNNNNNNNHNNP). Asn5, Asn8, Asn14, and Asn21 each carry an N-linked (GlcNAc...) asparagine glycan. A compositionally biased stretch (low complexity) spans 56–81 (QIINKNNNNNHNRNNNNNNNNNNNHN). Residues Asn141, Asn145, Asn159, and Asn165 are each glycosylated (N-linked (GlcNAc...) asparagine). Transmembrane regions (helical) follow at residues 178-198 (IVIFLILVPYIYILNFAIFPW), 210-230 (IHSFISMALVIQMLCNYYLCS), 305-325 (YFVLFLFYTSISIIYFFTLLI), 349-369 (LFLLGILIIILIIAGISIMAL), and 410-430 (IISNFSIVFGNLSFLWLLPTI). One can recognise a DHHC domain in the interval 261–311 (KWCNKCNHQKPERAHHCRYCNRCVLRMDHHCQWLQNCIGLFNQKYFVLFLF).

The protein belongs to the DHHC palmitoyltransferase family.

The protein resides in the membrane. It carries out the reaction L-cysteinyl-[protein] + hexadecanoyl-CoA = S-hexadecanoyl-L-cysteinyl-[protein] + CoA. This is Putative ZDHHC-type palmitoyltransferase 2 from Dictyostelium discoideum (Social amoeba).